The sequence spans 267 residues: Hydroxyethylthiazole kinase (267 aa).

Residue Met-46 participates in substrate binding. The ATP site is built by Arg-122 and Ser-168. Gly-195 provides a ligand contact to substrate.

It belongs to the Thz kinase family. Mg(2+) is required as a cofactor.

The enzyme catalyses 5-(2-hydroxyethyl)-4-methylthiazole + ATP = 4-methyl-5-(2-phosphooxyethyl)-thiazole + ADP + H(+). Its pathway is cofactor biosynthesis; thiamine diphosphate biosynthesis; 4-methyl-5-(2-phosphoethyl)-thiazole from 5-(2-hydroxyethyl)-4-methylthiazole: step 1/1. Functionally, catalyzes the phosphorylation of the hydroxyl group of 4-methyl-5-beta-hydroxyethylthiazole (THZ). This chain is Hydroxyethylthiazole kinase, found in Nitratidesulfovibrio vulgaris (strain DSM 19637 / Miyazaki F) (Desulfovibrio vulgaris).